Here is a 728-residue protein sequence, read N- to C-terminus: 1,4-alpha-glucan branching enzyme GlgB (728 aa).

The active-site Nucleophile is aspartate 405. The active-site Proton donor is the glutamate 458.

This sequence belongs to the glycosyl hydrolase 13 family. GlgB subfamily. As to quaternary structure, monomer.

It catalyses the reaction Transfers a segment of a (1-&gt;4)-alpha-D-glucan chain to a primary hydroxy group in a similar glucan chain.. The protein operates within glycan biosynthesis; glycogen biosynthesis. Catalyzes the formation of the alpha-1,6-glucosidic linkages in glycogen by scission of a 1,4-alpha-linked oligosaccharide from growing alpha-1,4-glucan chains and the subsequent attachment of the oligosaccharide to the alpha-1,6 position. This is 1,4-alpha-glucan branching enzyme GlgB from Salmonella arizonae (strain ATCC BAA-731 / CDC346-86 / RSK2980).